Reading from the N-terminus, the 987-residue chain is Pro-apoptotic serine protease NMA111 (987 aa).

Residues M1–V29 are disordered. Positions S11–F28 are enriched in polar residues. The serine protease stretch occupies residues V69–L262. Active-site charge relay system residues include H110, D141, and S224. 2 consecutive PDZ domains span residues E279–Q364 and P878–D950.

Belongs to the peptidase S1C family.

It localises to the nucleus. Functionally, nuclear serine protease which mediates apoptosis. The polypeptide is Pro-apoptotic serine protease NMA111 (NMA111) (Debaryomyces hansenii (strain ATCC 36239 / CBS 767 / BCRC 21394 / JCM 1990 / NBRC 0083 / IGC 2968) (Yeast)).